Reading from the N-terminus, the 363-residue chain is GDSL esterase/lipase At1g29670 (363 aa).

A signal peptide spans 1-24 (MESYLTKWCVVLVLLCFGFSVVKA). Residue S39 is the Nucleophile of the active site. Catalysis depends on residues D327 and H330.

The protein belongs to the 'GDSL' lipolytic enzyme family.

The protein resides in the secreted. This chain is GDSL esterase/lipase At1g29670, found in Arabidopsis thaliana (Mouse-ear cress).